A 54-amino-acid chain; its full sequence is ATP synthase F(0) complex subunit 8 (54 aa).

A helical transmembrane segment spans residues 9–29 (WFMILFFSWVIFLTIIPTKII). Residues 35–54 (NDPTQVDAKEHKNDTWNWPW) form a disordered region.

Belongs to the ATPase protein 8 family. In terms of assembly, component of the ATP synthase complex composed at least of ATP5F1A/subunit alpha, ATP5F1B/subunit beta, ATP5MC1/subunit c (homooctomer), MT-ATP6/subunit a, MT-ATP8/subunit 8, ATP5ME/subunit e, ATP5MF/subunit f, ATP5MG/subunit g, ATP5MK/subunit k, ATP5MJ/subunit j, ATP5F1C/subunit gamma, ATP5F1D/subunit delta, ATP5F1E/subunit epsilon, ATP5PF/subunit F6, ATP5PB/subunit b, ATP5PD/subunit d, ATP5PO/subunit OSCP. ATP synthase complex consists of a soluble F(1) head domain (subunits alpha(3) and beta(3)) - the catalytic core - and a membrane F(0) domain - the membrane proton channel (subunits c, a, 8, e, f, g, k and j). These two domains are linked by a central stalk (subunits gamma, delta, and epsilon) rotating inside the F1 region and a stationary peripheral stalk (subunits F6, b, d, and OSCP).

The protein resides in the mitochondrion membrane. Subunit 8, of the mitochondrial membrane ATP synthase complex (F(1)F(0) ATP synthase or Complex V) that produces ATP from ADP in the presence of a proton gradient across the membrane which is generated by electron transport complexes of the respiratory chain. ATP synthase complex consist of a soluble F(1) head domain - the catalytic core - and a membrane F(1) domain - the membrane proton channel. These two domains are linked by a central stalk rotating inside the F(1) region and a stationary peripheral stalk. During catalysis, ATP synthesis in the catalytic domain of F(1) is coupled via a rotary mechanism of the central stalk subunits to proton translocation. In vivo, can only synthesize ATP although its ATP hydrolase activity can be activated artificially in vitro. Part of the complex F(0) domain. In Danio rerio (Zebrafish), this protein is ATP synthase F(0) complex subunit 8.